The chain runs to 131 residues: Interleukin-13 (131 aa).

Positions 1–18 are cleaved as a signal peptide; the sequence is MALWLTVVIALTCLGGLA. 4 N-linked (GlcNAc...) asparagine glycosylation sites follow: Asn38, Asn48, Asn56, and Asn71. 2 disulfide bridges follow: Cys47–Cys75 and Cys63–Cys89.

The protein belongs to the IL-4/IL-13 family. In terms of assembly, interacts with IL13RA2.

The protein localises to the secreted. Cytokine that plays important roles in allergic inflammation and immune response to parasite infection. Synergizes with IL2 in regulating interferon-gamma synthesis. Stimulates B-cell proliferation, and activation of eosinophils, basophils, and mast cells. Plays an important role in controlling IL33 activity by modulating the production of transmembrane and soluble forms of interleukin-1 receptor-like 1/IL1RL1. Displays the capacity to antagonize Th1-driven proinflammatory immune response and downregulates synthesis of many proinflammatory cytokines including IL1, IL6, IL10, IL12 and TNF-alpha through a mechanism that partially involves suppression of NF-kappa-B. Also functions on nonhematopoietic cells, including endothelial cells where it induces vascular cell adhesion protein 1/VCAM1, which is important in the recruitment of eosinophils. Exerts its biological effects through its receptors which comprises the IL4R chain and the IL13RA1 chain, to activate JAK1 and TYK2, leading to the activation of STAT6. Aside from IL13RA1, another receptor IL13RA2 acts as a high affinity decoy for IL13 and mediates internalization and depletion of extracellular IL13. This Canis lupus familiaris (Dog) protein is Interleukin-13 (IL13).